The chain runs to 345 residues: Beta-hexosaminidase (345 aa).

Residues Asp60, Arg68, Arg132, and 162–163 contribute to the substrate site; that span reads KH. His175 serves as the catalytic Proton donor/acceptor. The active-site Nucleophile is Asp247.

It belongs to the glycosyl hydrolase 3 family. NagZ subfamily.

It localises to the cytoplasm. The enzyme catalyses Hydrolysis of terminal non-reducing N-acetyl-D-hexosamine residues in N-acetyl-beta-D-hexosaminides.. Its pathway is cell wall biogenesis; peptidoglycan recycling. Functionally, plays a role in peptidoglycan recycling by cleaving the terminal beta-1,4-linked N-acetylglucosamine (GlcNAc) from peptide-linked peptidoglycan fragments, giving rise to free GlcNAc, anhydro-N-acetylmuramic acid and anhydro-N-acetylmuramic acid-linked peptides. The chain is Beta-hexosaminidase from Actinobacillus pleuropneumoniae serotype 5b (strain L20).